We begin with the raw amino-acid sequence, 322 residues long: Cytochrome f (322 aa).

A signal peptide spans 1–37; the sequence is MQNRKTYAYDWIKKWMIKSISTLIIINTMVWSSVSEA. Tyr-38, Cys-58, Cys-61, and His-62 together coordinate heme. The helical transmembrane segment at 285-307 threads the bilayer; it reads VLRVQGLLLFFASVILAQIFLVL.

It belongs to the cytochrome f family. The 4 large subunits of the cytochrome b6-f complex are cytochrome b6, subunit IV (17 kDa polypeptide, petD), cytochrome f and the Rieske protein, while the 4 small subunits are PetG, PetL, PetM and PetN. The complex functions as a dimer. Heme is required as a cofactor.

The protein localises to the plastid. It localises to the chloroplast thylakoid membrane. Functionally, component of the cytochrome b6-f complex, which mediates electron transfer between photosystem II (PSII) and photosystem I (PSI), cyclic electron flow around PSI, and state transitions. In Anthoceros angustus (Hornwort), this protein is Cytochrome f (petA).